The following is a 367-amino-acid chain: N-acetylmuramoyl-L-alanine amidase BlyA (367 aa).

Residues valine 24–proline 158 enclose the N-acetylmuramoyl-L-alanine amidase domain. The disordered stretch occupies residues serine 178–serine 204. The segment covering lysine 180–serine 204 has biased composition (low complexity). 2 consecutive SH3b domains span residues serine 202 to valine 271 and glycine 298 to isoleucine 367.

This sequence belongs to the N-acetylmuramoyl-L-alanine amidase 2 family.

Its subcellular location is the secreted. It catalyses the reaction Hydrolyzes the link between N-acetylmuramoyl residues and L-amino acid residues in certain cell-wall glycopeptides.. In terms of biological role, autolysins are involved in some important biological processes such as cell separation, cell-wall turnover, competence for genetic transformation, formation of the flagella and sporulation. Involved in prophage SP-beta-mediated cell lysis. The sequence is that of N-acetylmuramoyl-L-alanine amidase BlyA (blyA) from Bacillus subtilis (strain 168).